A 689-amino-acid polypeptide reads, in one-letter code: Glycine--tRNA ligase beta subunit (689 aa).

The protein belongs to the class-II aminoacyl-tRNA synthetase family. As to quaternary structure, tetramer of two alpha and two beta subunits.

Its subcellular location is the cytoplasm. The enzyme catalyses tRNA(Gly) + glycine + ATP = glycyl-tRNA(Gly) + AMP + diphosphate. This Aeromonas salmonicida (strain A449) protein is Glycine--tRNA ligase beta subunit.